The following is a 908-amino-acid chain: 3-phosphoinositide-dependent protein kinase B (908 aa).

Low complexity-rich tracts occupy residues 53–170 (NNNF…SSSL), 179–189 (YSDSSDSIDSY), and 200–216 (QQQQ…QPLH). The disordered stretch occupies residues 53-267 (NNNFNNNNNN…PNSSIPHKKS (215 aa)). Positions 250-262 (KTSSFGLQPNSSI) are enriched in polar residues. Residues 271–527 (FDFIRTIGKG…ISEIKNHEFF (257 aa)) enclose the Protein kinase domain. Residues 281–283 (AYG) and K300 contribute to the ATP site. Residues 302-346 (LNKKLIIKEKKAKYVNTEKTILDSLDNPNIVKLFYTFQDENNLYF) form a PIF-pocket region. ATP contacts are provided by residues 349–351 (EYC) and D355. D394 serves as the catalytic Proton acceptor. Positions 398 and 412 each coordinate ATP. Disordered regions lie at residues 538 to 560 (SQTP…NSSL) and 606 to 755 (ISNN…KNLQ). Over residues 607 to 684 (SNNNNNNNNT…PAYSSTPSST (78 aa)) the composition is skewed to low complexity. Residues 696-709 (SSCSSNNLLGKSSN) show a composition bias toward polar residues. A compositionally biased stretch (low complexity) spans 710–741 (QQYQPFQFHQQQQQQQQQQQRERSSTTTPSPT). Residues 764 to 902 (SSFSTSSPMS…KLWVDLINEL (139 aa)) form the PH domain.

The protein belongs to the protein kinase superfamily. AGC Ser/Thr protein kinase family. PDPK1 subfamily.

It catalyses the reaction L-seryl-[protein] + ATP = O-phospho-L-seryl-[protein] + ADP + H(+). It carries out the reaction L-threonyl-[protein] + ATP = O-phospho-L-threonyl-[protein] + ADP + H(+). The chain is 3-phosphoinositide-dependent protein kinase B (pdkB) from Dictyostelium discoideum (Social amoeba).